Consider the following 426-residue polypeptide: FK506-binding protein 3 (426 aa).

2 disordered regions span residues 37-143 (SLDP…PKHQ) and 171-314 (TGNY…KKKK). 3 stretches are compositionally biased toward acidic residues: residues 65-94 (DYFEDDDDDEEEDDEEDELDDEEEEEEAEE), 111-131 (EDEEEDDEEEDDEDNDEDDVS), and 181-225 (QDEE…SEEE). 3 stretches are compositionally biased toward basic and acidic residues: residues 226–257 (GTPKIEEIVEEKEKVKESPKESKKRVAEESTS), 264–278 (KKDEKKSVQFSKELE), and 287–311 (VEKDNKKATPTKDKKETPVKDDGDK). Residues 340–426 (GAKVGIRYIG…TFDIKLVSLK (87 aa)) enclose the PPIase FKBP-type domain.

It belongs to the FKBP-type PPIase family. FKBP3/4 subfamily.

The protein resides in the nucleus. The protein localises to the nucleolus. The enzyme catalyses [protein]-peptidylproline (omega=180) = [protein]-peptidylproline (omega=0). Inhibited by both FK506 and rapamycin. Its function is as follows. PPIases accelerate the folding of proteins. It catalyzes the cis-trans isomerization of proline imidic peptide bonds in oligopeptides. In Candida albicans (strain SC5314 / ATCC MYA-2876) (Yeast), this protein is FK506-binding protein 3 (FPR3).